A 647-amino-acid chain; its full sequence is Carboxypeptidase Z (647 aa).

Positions 1–18 are cleaved as a signal peptide; that stretch reads MVPSLLLLLTGLFRATEP. Residues 35 to 157 form the FZ domain; it reads AQKAKCVDIS…AGEEEGCFDP (123 aa). Intrachain disulfides connect Cys-40/Cys-106, Cys-48/Cys-99, Cys-90/Cys-126, Cys-115/Cys-154, and Cys-119/Cys-143. In terms of domain architecture, Peptidase M14 spans 183-499; the sequence is KHHSYSQMVS…DALLNYMEMV (317 aa). Zn(2+) is bound by residues His-245 and Glu-248. The N-linked (GlcNAc...) asparagine glycan is linked to Asn-278. His-377 is a binding site for Zn(2+). Glu-469 serves as the catalytic Proton donor/acceptor.

The protein belongs to the peptidase M14 family. Interacts with WNT4 vie its FZ domain. Zn(2+) serves as cofactor. In terms of tissue distribution, in the early embryo it is initially expressed throughout the somites and subsequently becomes restricted to the sclerotome. Expressed in somites, paraxial head mesoderm and apical ectodermal ridge.

The protein localises to the secreted. It is found in the extracellular space. The protein resides in the extracellular matrix. Its activity is regulated as follows. Inhibited by 2-mercaptomethyl-3-guanidinoethylthiopropanoic acid (MGTA) and guanidinoethylmercaptosuccinic acid (GEMSA). Inhibited by chelating agents such as EDTA and EGTA. Functionally, cleaves substrates with C-terminal arginine residues. Modulates the Wnt signaling pathway, probably by cleaving some undefined protein. Regulates the development of skeletal elements during development, probably by activating WNT4. The polypeptide is Carboxypeptidase Z (CPZ) (Gallus gallus (Chicken)).